A 370-amino-acid polypeptide reads, in one-letter code: Divinyl chlorophyll a/b light-harvesting protein PcbD (370 aa).

A run of 6 helical transmembrane segments spans residues 27–47 (FIASHIGHTGLIAFAAGGSTL), 88–108 (VAAVAIVHLVLSMVYGGGALL), 140–160 (FILGHHLFFFGMACIAFVEWA), 201–221 (VMGGHAFLAFAELTGATIHMV), 248–268 (AVLSWSLAGIGWMAIVAAFWA), and 315–335 (LVNVHYYFGFFFLQGHFWHAL).

It belongs to the PsbB/PsbC family. IsiA/Pcb subfamily. As to quaternary structure, the antenna complex consists of divinyl chlorophylls (a and b) and divinyl chlorophyll a/b binding proteins and binds more divinyl chlorophyll b than does the antenna complex from high-light-adapted Prochlorococcus. The cofactor is divinyl chlorophyll a. Divinyl chlorophyll b serves as cofactor.

It localises to the cellular thylakoid membrane. In terms of biological role, the antenna complex functions as a light receptor, it captures and delivers excitation energy to photosystems II and I. The Prochlorales pcb genes are not related to higher plant LHCs. The polypeptide is Divinyl chlorophyll a/b light-harvesting protein PcbD (pcbD) (Prochlorococcus marinus (strain NATL2A)).